We begin with the raw amino-acid sequence, 347 residues long: Protein-glutamate methylesterase/protein-glutamine glutaminase (347 aa).

In terms of domain architecture, Response regulatory spans 6–123 (RVLVVDDSPT…HRPFGDLAEK (118 aa)). Asp57 carries the 4-aspartylphosphate modification. A CheB-type methylesterase domain is found at 150–342 (FRVGRKIVAI…EEILKLTAAR (193 aa)). Residues Ser162, His188, and Asp284 contribute to the active site.

It belongs to the CheB family. In terms of processing, phosphorylated by CheA. Phosphorylation of the N-terminal regulatory domain activates the methylesterase activity.

It localises to the cytoplasm. It carries out the reaction [protein]-L-glutamate 5-O-methyl ester + H2O = L-glutamyl-[protein] + methanol + H(+). The catalysed reaction is L-glutaminyl-[protein] + H2O = L-glutamyl-[protein] + NH4(+). Its function is as follows. Involved in chemotaxis. Part of a chemotaxis signal transduction system that modulates chemotaxis in response to various stimuli. Catalyzes the demethylation of specific methylglutamate residues introduced into the chemoreceptors (methyl-accepting chemotaxis proteins or MCP) by CheR. Also mediates the irreversible deamidation of specific glutamine residues to glutamic acid. The sequence is that of Protein-glutamate methylesterase/protein-glutamine glutaminase from Rhizobium etli (strain ATCC 51251 / DSM 11541 / JCM 21823 / NBRC 15573 / CFN 42).